Here is a 253-residue protein sequence, read N- to C-terminus: Discoidin-1 subunit A (253 aa).

An N-acetylserine modification is found at Ser-2. The 151-residue stretch at 2–152 folds into the F5/8 type C domain; it reads STQGLVQLLA…ISLRCEFYTQ (151 aa). A Cell attachment site motif is present at residues 79 to 81; the sequence is RGD.

As to quaternary structure, tetramer of four different chains (A to D). In terms of tissue distribution, stalk cells.

Its subcellular location is the cytoplasm. Functionally, galactose- and N-acetylgalactosamine-binding lectin. May play a role in cell-substratum adhesion rather than in cell-cell adhesion. May be necessary for the maintenance of normal elongate morphology during aggregation. The chain is Discoidin-1 subunit A (dscA-1) from Dictyostelium discoideum (Social amoeba).